We begin with the raw amino-acid sequence, 232 residues long: Large ribosomal subunit protein uL1 (232 aa).

This sequence belongs to the universal ribosomal protein uL1 family. As to quaternary structure, part of the 50S ribosomal subunit.

Binds directly to 23S rRNA. The L1 stalk is quite mobile in the ribosome, and is involved in E site tRNA release. Functionally, protein L1 is also a translational repressor protein, it controls the translation of the L11 operon by binding to its mRNA. This chain is Large ribosomal subunit protein uL1, found in Methylobacterium radiotolerans (strain ATCC 27329 / DSM 1819 / JCM 2831 / NBRC 15690 / NCIMB 10815 / 0-1).